A 387-amino-acid polypeptide reads, in one-letter code: 3-ketoacyl-CoA thiolase (387 aa).

Catalysis depends on cysteine 91, which acts as the Acyl-thioester intermediate. Residues histidine 343 and cysteine 373 each act as proton acceptor in the active site.

It belongs to the thiolase-like superfamily. Thiolase family. In terms of assembly, heterotetramer of two alpha chains (FadB) and two beta chains (FadA).

The protein localises to the cytoplasm. It carries out the reaction an acyl-CoA + acetyl-CoA = a 3-oxoacyl-CoA + CoA. Its pathway is lipid metabolism; fatty acid beta-oxidation. Functionally, catalyzes the final step of fatty acid oxidation in which acetyl-CoA is released and the CoA ester of a fatty acid two carbons shorter is formed. The sequence is that of 3-ketoacyl-CoA thiolase from Klebsiella pneumoniae subsp. pneumoniae (strain ATCC 700721 / MGH 78578).